We begin with the raw amino-acid sequence, 652 residues long: DNA ligase (652 aa).

NAD(+) contacts are provided by residues 29–33 (DSDYD), 78–79 (SL), and Glu107. Lys109 acts as the N6-AMP-lysine intermediate in catalysis. Positions 130, 164, 278, and 302 each coordinate NAD(+). 4 residues coordinate Zn(2+): Cys395, Cys398, Cys413, and Cys418. The 76-residue stretch at 577 to 652 (NSDAALFGLT…IEDEDWLRKF (76 aa)) folds into the BRCT domain.

The protein belongs to the NAD-dependent DNA ligase family. LigA subfamily. Requires Mg(2+) as cofactor. It depends on Mn(2+) as a cofactor.

It carries out the reaction NAD(+) + (deoxyribonucleotide)n-3'-hydroxyl + 5'-phospho-(deoxyribonucleotide)m = (deoxyribonucleotide)n+m + AMP + beta-nicotinamide D-nucleotide.. Functionally, DNA ligase that catalyzes the formation of phosphodiester linkages between 5'-phosphoryl and 3'-hydroxyl groups in double-stranded DNA using NAD as a coenzyme and as the energy source for the reaction. It is essential for DNA replication and repair of damaged DNA. In Streptococcus pyogenes serotype M6 (strain ATCC BAA-946 / MGAS10394), this protein is DNA ligase.